The primary structure comprises 422 residues: Histidine--tRNA ligase (422 aa).

It belongs to the class-II aminoacyl-tRNA synthetase family. In terms of assembly, homodimer.

Its subcellular location is the cytoplasm. The catalysed reaction is tRNA(His) + L-histidine + ATP = L-histidyl-tRNA(His) + AMP + diphosphate + H(+). This chain is Histidine--tRNA ligase, found in Syntrophomonas wolfei subsp. wolfei (strain DSM 2245B / Goettingen).